A 398-amino-acid chain; its full sequence is Aldo-keto reductase ausK (398 aa).

Aspartate 76 provides a ligand contact to NADP(+). Catalysis depends on tyrosine 81, which acts as the Proton donor. Residue histidine 156 participates in substrate binding. NADP(+) contacts are provided by residues 186-187, glutamine 212, 241-251, and 317-325; these read CN, DALGSGKFQSR, and RKIQHLHDN.

It belongs to the aldo/keto reductase family. Aldo/keto reductase 2 subfamily. In terms of assembly, homodimer.

The protein operates within secondary metabolite biosynthesis; terpenoid biosynthesis. Aldo-keto reductase; part of the gene cluster B that mediates the biosynthesis of austinol and dehydroaustinol, two fungal meroterpenoids. The first step of the pathway is the synthesis of 3,5-dimethylorsellinic acid by the polyketide synthase ausA. 3,5-dimethylorsellinic acid is then prenylated by the polyprenyl transferase ausN. Further epoxidation by the FAD-dependent monooxygenase ausM and cyclization by the probable terpene cyclase ausL lead to the formation of protoaustinoid A. Protoaustinoid A is then oxidized to spiro-lactone preaustinoid A3 by the combined action of the FAD-binding monooxygenases ausB and ausC, and the dioxygenase ausE. Acid-catalyzed keto-rearrangement and ring contraction of the tetraketide portion of preaustinoid A3 by ausJ lead to the formation of preaustinoid A4. The aldo-keto reductase ausK, with the help of ausH, is involved in the next step by transforming preaustinoid A4 into isoaustinone which is in turn hydroxylated by the P450 monooxygenase ausI to form austinolide. Finally, the cytochrome P450 monooxygenase ausG modifies austinolide to austinol. Austinol can be further modified to dehydroaustinol which forms a diffusible complex with diorcinol that initiates conidiation. Due to genetic rearrangements of the clusters and the subsequent loss of some enzymes, the end products of the Emericella nidulans austinoid biosynthesis clusters are austinol and dehydroaustinol, even if additional enzymes, such as the O-acetyltransferase ausQ and the cytochrome P450 monooxygenase ausR are still functional. The polypeptide is Aldo-keto reductase ausK (Emericella nidulans (strain FGSC A4 / ATCC 38163 / CBS 112.46 / NRRL 194 / M139) (Aspergillus nidulans)).